Here is a 4095-residue protein sequence, read N- to C-terminus: Protein adenylyltransferase and cysteine protease IbpA (4095 aa).

The first 97 residues, 1–97, serve as a signal peptide directing secretion; it reads MNKNCYKLIF…MVAAPNFAQS (97 aa). Binds bovine IgG2 Fc regions lie at residues 972–1515 and 1116–1255; these read SERI…FVKA and SEVQ…FLKE. 5 disordered regions span residues 1082 to 1117, 1130 to 1154, 1204 to 1223, 1625 to 1652, and 1705 to 1732; these read EVSDDWERDPDEPDEPDYKTESRLETRDRFDTLPSE, KEKAQQKRQAEALQAKTKNEQLQSD, QEALAKQKQEQQKQADAKAK, TVSHERDSQNGEKTNIGGASSNTGTGFT, and EEDEAKAEQQAKAKAAPDATDNAAQKEE. A compositionally biased stretch (acidic residues) spans 1087–1096; it reads WERDPDEPDE. Composition is skewed to basic and acidic residues over residues 1097–1117 and 1130–1139; these read PDYKTESRLETRDRFDTLPSE and KEKAQQKRQA. Residues 1116–1247 are a coiled coil; that stretch reads SEVQDKLRQK…AKDHQIEEAL (132 aa). Low complexity predominate over residues 1716-1727; sequence KAKAAPDATDNA. Repeat copies occupy residues 2250–2271, 2272–2295, 2296–2317, 2318–2343, 2344–2365, 2366–2387, 2388–2413, 2414–2435, 2436–2457, 2458–2483, 2484–2505, and 2506–2527. Residues 2250-2527 form a 12 X 22 AA approximate repeats region; sequence YSTLGDQNAN…RTLGGESDSP (278 aa). Polar residues-rich tracts occupy residues 2592–2611 and 2794–2803; these read SDTEAGNGTYSEITSRTRNA and TAPQKTSPVK. Disordered stretches follow at residues 2592–2617, 2765–2809, 2825–2894, 2914–2933, 2943–3033, and 3049–3069; these read SDTEAGNGTYSEITSRTRNANDPLPP, TIGE…SAEG, AKGQ…SPKR, LKSKEDQANPAKAEVSEPIY, LARA…KSED, and NKSQAKEAKSEQETVSKPNYD. Over residues 2880–2889 the composition is skewed to low complexity; it reads PFPSEFSSEP. 2 stretches are compositionally biased toward polar residues: residues 2977-2996 and 3005-3018; these read SNLSDSISNETIAENGQSVA and AESNRNNNGNQKLQ. Residues 3052–3062 show a composition bias toward basic and acidic residues; it reads QAKEAKSEQET. In terms of domain architecture, Fido 1 spans 3218–3355; sequence LTVEMIEKLN…AEVVKEFLTE (138 aa). Residues 3222–4095 are yopT-like; the sequence is MIEKLNHGLR…FNVVNYKKNN (874 aa). A binds bovine IgG2 Fc region spans residues 3354-3698; it reads TELGKKSSPQ…VDFINRAKNE (345 aa). 2 disordered regions span residues 3357–3415 and 3432–3454; these read GKKS…PSVP and AELKDAAGGNKKAAEKSEGATGV. Polar residues-rich tracts occupy residues 3360-3379 and 3388-3401; these read SSPQEGGANNQNGQATSPVT and VENTQSADSLTIKQ. The span at 3443-3454 shows a compositional bias: basic and acidic residues; the sequence is KAAEKSEGATGV. Positions 3535-3557 are arm region; the sequence is IPEATVKQMSHLPEFDDILTEGA. The Fido 2 domain occupies 3640-3777; it reads LTVQMIENLN…SEVVVEFLKE (138 aa). ATP is bound by residues 3670–3671, 3722–3724, R3728, and Q3757; these read KE and GNG. The segment covering 3783-3798 has biased composition (basic and acidic residues); that stretch reads SKEDNEQNLEKTDRTS. The segment at 3783–3829 is disordered; that stretch reads SKEDNEQNLEKTDRTSTDLTESAVENSAALSSGTVRSATVSETVTET. Over residues 3799 to 3815 the composition is skewed to polar residues; the sequence is TDLTESAVENSAALSSG. Positions 3816–3829 are enriched in low complexity; that stretch reads TVRSATVSETVTET. Active-site for cysteine protease activity residues include C3910, H4033, and D4048.

It in the central section; belongs to the fic family. In the C-terminal section; belongs to the peptidase C58 family. As to quaternary structure, immunoglobulin-binding protein. In terms of processing, the long form of the protein is probably processed, and/or the transcript may be subject to differential translational initiation.

It is found in the secreted. The protein localises to the cell outer membrane. It carries out the reaction L-tyrosyl-[protein] + ATP = O-(5'-adenylyl)-L-tyrosyl-[protein] + diphosphate. It catalyses the reaction L-threonyl-[protein] + ATP = 3-O-(5'-adenylyl)-L-threonyl-[protein] + diphosphate. Functionally, adenylyltransferase involved in virulence by mediating the addition of adenosine 5'-monophosphate (AMP) to specific tyrosine residue of host Rho GTPases RhoA, Rac and Cdc42. The resulting AMPylation inactivates Rho GTPases, thereby inhibiting actin assembly in infected cells. Probably also acts as a cysteine protease, which may play a central role after invasion of host cell and in virulence. Possible member (with IbpB) of a 2 partner secretion. Probably able to bind bovine epithelial cells (host cells). May participate in the formation of fibrils at the surface of the bacteria. The polypeptide is Protein adenylyltransferase and cysteine protease IbpA (ibpA) (Histophilus somni (strain 2336) (Haemophilus somnus)).